The chain runs to 150 residues: Large ribosomal subunit protein uL13 (150 aa).

It belongs to the universal ribosomal protein uL13 family. In terms of assembly, part of the 50S ribosomal subunit.

Functionally, this protein is one of the early assembly proteins of the 50S ribosomal subunit, although it is not seen to bind rRNA by itself. It is important during the early stages of 50S assembly. The sequence is that of Large ribosomal subunit protein uL13 from Chlamydia trachomatis serovar A (strain ATCC VR-571B / DSM 19440 / HAR-13).